Here is a 519-residue protein sequence, read N- to C-terminus: Transcription factor STP1 (519 aa).

The segment at Ile16–Lys35 is i. A compositionally biased stretch (basic and acidic residues) spans Ala47–Thr61. Disordered stretches follow at residues Ala47–Ser69 and Leu115–Thr150. Residues Leu65–Ser97 are II. The span at Ser131 to Pro146 shows a compositional bias: low complexity. Residues Phe160–His182 form a C2H2-type 1 zinc finger. A C2H2-type 2; atypical zinc finger spans residues Tyr188–His223. Residues Gly240 to Cys265 form a C2H2-type 3; atypical zinc finger. A disordered region spans residues Ile357–Val382. Residues Val364 to Glu381 show a composition bias toward polar residues.

Interacts (via Region II) with SSY5; protease component of the SPS-sensor. Phosphorylated by casein kinase I. Phosphorylation is not dependent on the extracellular amino acid levels, but is a prerequisite for proteolytic processing. Post-translationally, activated by the amino acid-induced proteolytic removal of an N-terminal inhibitory domain by serine protease SSY5, an intrinsic component of the SPS-sensor. Processing requires at least 2 components of the SCF(GRR1) ubiquitin ligase complex, namely the F-box protein GRR1 and the E2 enzyme CDC34, but does not depend on the proteasome. Processing is negatively regulated by the protein phosphatase 2A regulatory subunit RTS1.

The protein resides in the cell membrane. The protein localises to the nucleus. Transcription factor involved in the regulation of gene expression in response to extracellular amino acid levels. Synthesized as latent cytoplasmic precursor, which, upon a signal initiated by the plasma membrane SPS (SSY1-PTR3-SSY5) amino acid sensor system, becomes proteolytically activated and relocates to the nucleus, where it induces the expression of SPS-sensor-regulated genes, including the amino-acid permeases AGP1, BAP2, BAP3 and GNP1. Binding to promoters is facilitated by DAL81. Involved in the repression of genes subject to nitrogen catabolite repression and genes involved in stress response. Negatively regulated by inner nuclear membrane proteins ASI1, ASI2 and ASI3, which prevent unprocessed precursor forms that escape cytoplasmic anchoring from inducing SPS-sensor-regulated genes. May be involved in pre-tRNA splicing. This is Transcription factor STP1 (STP1) from Saccharomyces cerevisiae (strain RM11-1a) (Baker's yeast).